A 140-amino-acid chain; its full sequence is Nucleoside diphosphate kinase (140 aa).

Residues Lys11, Phe59, Arg87, Thr93, Arg104, and Asn114 each coordinate ATP. His117 acts as the Pros-phosphohistidine intermediate in catalysis.

This sequence belongs to the NDK family. Homotetramer. It depends on Mg(2+) as a cofactor.

It localises to the cytoplasm. The catalysed reaction is a 2'-deoxyribonucleoside 5'-diphosphate + ATP = a 2'-deoxyribonucleoside 5'-triphosphate + ADP. The enzyme catalyses a ribonucleoside 5'-diphosphate + ATP = a ribonucleoside 5'-triphosphate + ADP. Its function is as follows. Major role in the synthesis of nucleoside triphosphates other than ATP. The ATP gamma phosphate is transferred to the NDP beta phosphate via a ping-pong mechanism, using a phosphorylated active-site intermediate. The protein is Nucleoside diphosphate kinase of Francisella tularensis subsp. holarctica (strain LVS).